Consider the following 131-residue polypeptide: MIEVAEIIAREIRRGKIVEIGVGFYLEVAKRLRESGIDILVVDINEKAINYARKQGIKGVVDDIFNPTLGIYKDAKAIYSIRPAPEMMKPLLDLARKLKIPLYIVPLTGDRTPNGMKLINYKGIPIYKWEP.

This sequence belongs to the UPF0146 family.

This Pyrococcus horikoshii (strain ATCC 700860 / DSM 12428 / JCM 9974 / NBRC 100139 / OT-3) protein is UPF0146 protein PH0209.